The primary structure comprises 245 residues: Ubiquinone biosynthesis O-methyltransferase (245 aa).

4 residues coordinate S-adenosyl-L-methionine: Arg49, Gly69, Asp90, and Met134.

The protein belongs to the methyltransferase superfamily. UbiG/COQ3 family.

It carries out the reaction a 3-demethylubiquinol + S-adenosyl-L-methionine = a ubiquinol + S-adenosyl-L-homocysteine + H(+). It catalyses the reaction a 3-(all-trans-polyprenyl)benzene-1,2-diol + S-adenosyl-L-methionine = a 2-methoxy-6-(all-trans-polyprenyl)phenol + S-adenosyl-L-homocysteine + H(+). The protein operates within cofactor biosynthesis; ubiquinone biosynthesis. Its function is as follows. O-methyltransferase that catalyzes the 2 O-methylation steps in the ubiquinone biosynthetic pathway. In Vibrio cholerae serotype O1 (strain ATCC 39541 / Classical Ogawa 395 / O395), this protein is Ubiquinone biosynthesis O-methyltransferase.